Consider the following 131-residue polypeptide: Fumarate reductase subunit C (131 aa).

Transmembrane regions (helical) follow at residues 30 to 50, 58 to 78, and 109 to 129; these read EGTCLPQLWFSLVVLFGVFAL, AGFVGFLSNPIVMLINIVTLI, and IVRGLWGLTIVVTVVILAVAL.

It belongs to the FrdC family. In terms of assembly, part of an enzyme complex containing four subunits: a flavoprotein (FrdA), an iron-sulfur protein (FrdB), and two hydrophobic anchor proteins (FrdC and FrdD).

It localises to the cell inner membrane. Its function is as follows. Two distinct, membrane-bound, FAD-containing enzymes are responsible for the catalysis of fumarate and succinate interconversion; fumarate reductase is used in anaerobic growth, and succinate dehydrogenase is used in aerobic growth. Anchors the catalytic components of the fumarate reductase complex to the cell inner membrane, binds quinones. The polypeptide is Fumarate reductase subunit C (Proteus mirabilis (strain HI4320)).